The sequence spans 2380 residues: Probable polyketide synthase 25 (2380 aa).

Positions 1–18 (MDNSYLNNPQFDINNGNK) are enriched in polar residues. The segment at 1–29 (MDNSYLNNPQFDINNGNKEVTDDDNNKNN) is disordered. In terms of domain architecture, Ketosynthase family 3 (KS3) spans 31–457 (DNLVAIVGVG…GSNCCLVLSQ (427 aa)). Catalysis depends on for beta-ketoacyl synthase activity residues Cys198, His340, and His380. The tract at residues 649–682 (GIKASFMLGHSLGEVTTAYCSGMIDIDQLCYLIY) is acyl/malonyl transferase. Ser659 serves as the catalytic For acyl/malonyl transferase activity. Residues 948–1070 (ISILGNSMQD…ANFQLYNNGK (123 aa)) form an N-terminal hotdog fold region. The PKS/mFAS DH domain occupies 948–1234 (ISILGNSMQD…CTSLTPVKDP (287 aa)). The Proton acceptor; for dehydratase activity role is filled by His982. Residues 1085-1234 (NLSSIPWDKF…CTSLTPVKDP (150 aa)) form a C-terminal hotdog fold region. Asp1148 (proton donor; for dehydratase activity) is an active-site residue. A Carrier domain is found at 2299–2376 (KNSTNIKDKF…MVCQIINDNF (78 aa)). Ser2336 carries the post-translational modification O-(pantetheine 4'-phosphoryl)serine.

The cofactor is pantetheine 4'-phosphate.

Probable polyketide synthase. The protein is Probable polyketide synthase 25 (pks25) of Dictyostelium discoideum (Social amoeba).